The primary structure comprises 214 residues: Nascent polypeptide-associated complex subunit alpha (214 aa).

The interval 1–80 (MPGEATETVP…SEKKARKAMS (80 aa)) is disordered. Acidic residues predominate over residues 29 to 40 (SDSDDSPPELEQ). Residues 41-56 (DSTQTTTQQAQLAAAA) show a composition bias toward low complexity. Positions 69-134 (SRSEKKARKA…AKIEDLSQQA (66 aa)) constitute an NAC-A/B domain. Positions 175–212 (VEVKDIELVMSQANVSRAKAVRALKNNSNDIVNAIMEL) constitute a UBA domain.

It belongs to the NAC-alpha family.

In terms of biological role, may promote appropriate targeting of ribosome-nascent polypeptide complexes. The polypeptide is Nascent polypeptide-associated complex subunit alpha (naca) (Xenopus tropicalis (Western clawed frog)).